The sequence spans 84 residues: CDC42 small effector protein 2 (84 aa).

Residues cysteine 10 and cysteine 11 are each lipidated (S-palmitoyl cysteine). The CRIB domain maps to 29–42; the sequence is IGEPTNFAHTAHVG. Phosphoserine occurs at positions 43 and 52.

Belongs to the CDC42SE/SPEC family. Interacts with CDC42 (in GTP-bound form). Interacts weakly with RAC1 and not at all with RHOA.

The protein localises to the cytoplasm. It localises to the cytoskeleton. The protein resides in the cell membrane. It is found in the cell projection. Its subcellular location is the phagocytic cup. In terms of biological role, probably involved in the organization of the actin cytoskeleton by acting downstream of CDC42, inducing actin filament assembly. Alters CDC42-induced cell shape changes. In activated T-cells, may play a role in CDC42-mediated F-actin accumulation at the immunological synapse. May play a role in early contractile events in phagocytosis in macrophages. This chain is CDC42 small effector protein 2 (CDC42SE2), found in Pongo abelii (Sumatran orangutan).